A 462-amino-acid polypeptide reads, in one-letter code: MENKKENFSEWYNEIITLAELSDKRYPVKGMNVWLPYGWKIMSLIDSIVRRAVDKRNFQEVNFPILIGRSMLEVEFEHIRGFENEIYWVTKGGKEKLEEELALRPTSESAMYPMFSLWIRSHADLPLKIYQIVSVYRYETKHTRSFIRIREIHFFEAHTAHATYEDAEAQMDQYKEIWREISSLLCLPYFYDQRPDWDKFPGAMYTIAFDTVLPSGRSLQIGTIHQYGTNFSKNYDIKYLKEDGTFDYAHQTTYGMSERLLAAIIGIHGDDKGLVLPPDVAPIQVIIIPIPGAGVMEYARDVENTLNSINIRVKVDDRENYTPGYKFNDWEMRGVPLRIEIGEREVKNRTLTISMRNIQGKLTIERSKLIYEVPDTLIRIREKMMENAQKVFKDHVFRATKLEEFNRDGLITAFWCGSKECSDKIEAETEKSVLGFMVDSSETGKCVVCGKNGKMAVFSRSY.

This sequence belongs to the class-II aminoacyl-tRNA synthetase family. ProS type 3 subfamily. In terms of assembly, homodimer.

It is found in the cytoplasm. The catalysed reaction is tRNA(Pro) + L-proline + ATP = L-prolyl-tRNA(Pro) + AMP + diphosphate. In terms of biological role, catalyzes the attachment of proline to tRNA(Pro) in a two-step reaction: proline is first activated by ATP to form Pro-AMP and then transferred to the acceptor end of tRNA(Pro). This Thermoplasma acidophilum (strain ATCC 25905 / DSM 1728 / JCM 9062 / NBRC 15155 / AMRC-C165) protein is Proline--tRNA ligase.